A 328-amino-acid polypeptide reads, in one-letter code: C-type lectin domain family 4 member K (328 aa).

The Cytoplasmic portion of the chain corresponds to 1 to 43; sequence MTVEKEAPDAHFTVDKQNISLWPREPPPKSGPSLVPGKTPTVR. The helical; Signal-anchor for type II membrane protein transmembrane segment at 44 to 64 threads the bilayer; that stretch reads AALICLTLVLVASVLLQAVLY. Residues 65 to 328 are Extracellular-facing; that stretch reads PRFMGTISDV…CKRPYVPSEP (264 aa). Residues Asn87, Asn113, and Asn180 are each glycosylated (N-linked (GlcNAc...) asparagine). A coiled-coil region spans residues 145-190; sequence EEVSTLNAQIPELKSDLEKASALNTKIRALQGSLENMSKLLKRQND. One can recognise a C-type lectin domain in the interval 202-320; it reads FKGNFYYFSL…CDKTFLFICK (119 aa). Disulfide bonds link Cys223-Cys319 and Cys295-Cys311.

As to quaternary structure, homotrimer. Exclusively expressed by Langerhans cells. Expressed in astrocytoma and malignant ependymoma, but not in normal brain tissues.

It is found in the membrane. Calcium-dependent lectin displaying mannose-binding specificity. Induces the formation of Birbeck granules (BGs); is a potent regulator of membrane superimposition and zippering. Binds to sulfated as well as mannosylated glycans, keratan sulfate (KS) and beta-glucans. Facilitates uptake of antigens and is involved in the routing and/or processing of antigen for presentation to T cells. Major receptor on primary Langerhans cells for Candida species, Saccharomyces species, and Malassezia furfur. Protects against human immunodeficiency virus-1 (HIV-1) infection. Binds to high-mannose structures present on the envelope glycoprotein which is followed by subsequent targeting of the virus to the Birbeck granules leading to its rapid degradation. The protein is C-type lectin domain family 4 member K (CD207) of Homo sapiens (Human).